The chain runs to 235 residues: Transmembrane protein 215 (235 aa).

The next 2 membrane-spanning stretches (helical) occupy residues 12–32 and 40–60; these read LVVA…VSGM and IPLL…IALA. Residues 99-145 form a disordered region; that stretch reads SDLESGKGSSDELAKKAGLRGKPPPQSQGEVSVASSINSPTPTEEGE. Polar residues predominate over residues 125 to 140; it reads SQGEVSVASSINSPTP.

Its subcellular location is the membrane. The polypeptide is Transmembrane protein 215 (TMEM215) (Homo sapiens (Human)).